A 178-amino-acid polypeptide reads, in one-letter code: Putative type II secretion system M-type protein YghD (178 aa).

Over 1–39 the chain is Cytoplasmic; the sequence is MLRDKFIHYFQQWRERQLSRGEHWLAQHLAGRSPREKGM. The chain crosses the membrane as a helical span at residues 40 to 60; the sequence is LLAAVVFLFSVGYYVLIWQPL. Residues 61–178 lie on the Periplasmic side of the membrane; that stretch reads SERIEQQETI…NVQRLEFGRG (118 aa).

This sequence belongs to the GSP M family.

It localises to the cell inner membrane. Functionally, involved in a type II secretion system (T2SS, formerly general secretion pathway, GSP) for the export of folded proteins across the outer membrane. In Escherichia coli (strain K12), this protein is Putative type II secretion system M-type protein YghD (yghD).